The primary structure comprises 501 residues: Capsid protein (501 aa).

Residues 78-98 (SEEGFPVEPKTEEKDIPSTSG) are disordered. The Nuclear localization signal signature appears at 122 to 125 (KRGF). The segment at 431-448 (CKCWICHEEGHYANECPK) adopts a CCHC-type zinc-finger fold.

This sequence belongs to the caulimoviridae capsid protein family. Interacts (via nuclear localization signal) with host importin alpha.

The protein resides in the virion. It is found in the host nucleus. In terms of biological role, self assembles to form an icosahedral capsid, about 50 nm in diameter, nm, composed of 420 subunits of the viral capsid protein. The capsid encapsulates the genomic dsDNA. Following virus entry into host cell, provides nuclear import of the viral genome. Virus particles do not enter the nucleus, but dock at the nuclear membrane through the interaction with host importins. The sequence is that of Capsid protein from Cestrum parqui (CmYLCV).